We begin with the raw amino-acid sequence, 487 residues long: Solute carrier family 22 member 15-like (487 aa).

A helical transmembrane segment spans residues 22–42 (AFLTLLQVYVACQSMLIVLVG). N-linked (GlcNAc...) asparagine glycosylation is present at Asn70. A run of 11 helical transmembrane segments spans residues 90–110 (LASS…GPLS), 117–137 (PVYL…ALAP), 141–161 (VFAV…LVSF), 178–198 (SLTN…GFYI), 203–223 (TLAF…FLLP), 286–306 (ILLM…TLNA), 315–335 (LNVA…LYFI), 345–365 (ATAG…FLPE), 374–394 (TVLA…VYIY), 406–426 (AGLG…PFIP), and 435–455 (MPFV…LLLP).

The protein belongs to the major facilitator (TC 2.A.1) superfamily. Organic cation transporter (TC 2.A.1.19) family.

Its subcellular location is the membrane. Probably transports organic cations. The chain is Solute carrier family 22 member 15-like (slc22a15b) from Xenopus tropicalis (Western clawed frog).